The chain runs to 379 residues: Succinyl-diaminopimelate desuccinylase (379 aa).

Position 70 (His-70) interacts with Zn(2+). Residue Asp-72 is part of the active site. Position 103 (Asp-103) interacts with Zn(2+). The active-site Proton acceptor is Glu-137. Zn(2+) contacts are provided by Glu-138, Glu-166, and His-352.

The protein belongs to the peptidase M20A family. DapE subfamily. As to quaternary structure, homodimer. Requires Zn(2+) as cofactor. Co(2+) is required as a cofactor.

The catalysed reaction is N-succinyl-(2S,6S)-2,6-diaminopimelate + H2O = (2S,6S)-2,6-diaminopimelate + succinate. Its pathway is amino-acid biosynthesis; L-lysine biosynthesis via DAP pathway; LL-2,6-diaminopimelate from (S)-tetrahydrodipicolinate (succinylase route): step 3/3. Its function is as follows. Catalyzes the hydrolysis of N-succinyl-L,L-diaminopimelic acid (SDAP), forming succinate and LL-2,6-diaminopimelate (DAP), an intermediate involved in the bacterial biosynthesis of lysine and meso-diaminopimelic acid, an essential component of bacterial cell walls. In Burkholderia ambifaria (strain ATCC BAA-244 / DSM 16087 / CCUG 44356 / LMG 19182 / AMMD) (Burkholderia cepacia (strain AMMD)), this protein is Succinyl-diaminopimelate desuccinylase.